The following is a 261-amino-acid chain: Indole-3-glycerol phosphate synthase (261 aa).

It belongs to the TrpC family.

It catalyses the reaction 1-(2-carboxyphenylamino)-1-deoxy-D-ribulose 5-phosphate + H(+) = (1S,2R)-1-C-(indol-3-yl)glycerol 3-phosphate + CO2 + H2O. It participates in amino-acid biosynthesis; L-tryptophan biosynthesis; L-tryptophan from chorismate: step 4/5. This chain is Indole-3-glycerol phosphate synthase, found in Burkholderia thailandensis (strain ATCC 700388 / DSM 13276 / CCUG 48851 / CIP 106301 / E264).